Reading from the N-terminus, the 293-residue chain is Ribulose bisphosphate carboxylase/oxygenase activase, chloroplastic (293 aa).

An ATP-binding site is contributed by 75-82 (PGTGKTTV).

Belongs to the CbxX/CfxQ family. Forms homooligomers. Forms heterohexameric rings with the nuclear-encoded Rca subunit consisting of 3 of each nuclear- and plastidial-encoded subunits that alternate in the ring.

The protein localises to the plastid. It is found in the chloroplast. Functionally, required for the expression of ribulose 1,5-bisphosphate carboxylase/oxygenase (RuBisCo). ATPase involved in the activation of red-type RuBisCo, which tends to form inactive complexes with its substrate ribulose 1,5-bisphosphate (RuBP). Catalyzes the release of RuBP from inhibited RuBisCo in an ATP-dependent manner. Activation of RuBisCO involves the ATP-dependent carboxylation of the epsilon-amino group of lysine leading to a carbamate structure. The nuclear-encoded subunit plays a more critical role in activase function than the plastidial-encoded subunit. In Cyanidioschyzon merolae (strain NIES-3377 / 10D) (Unicellular red alga), this protein is Ribulose bisphosphate carboxylase/oxygenase activase, chloroplastic.